We begin with the raw amino-acid sequence, 264 residues long: Thiazole synthase (264 aa).

K101 acts as the Schiff-base intermediate with DXP in catalysis. 1-deoxy-D-xylulose 5-phosphate-binding positions include G162, 188–189, and 210–211; these read AG and NT.

The protein belongs to the ThiG family. Homotetramer. Forms heterodimers with either ThiH or ThiS.

Its subcellular location is the cytoplasm. It carries out the reaction [ThiS sulfur-carrier protein]-C-terminal-Gly-aminoethanethioate + 2-iminoacetate + 1-deoxy-D-xylulose 5-phosphate = [ThiS sulfur-carrier protein]-C-terminal Gly-Gly + 2-[(2R,5Z)-2-carboxy-4-methylthiazol-5(2H)-ylidene]ethyl phosphate + 2 H2O + H(+). It functions in the pathway cofactor biosynthesis; thiamine diphosphate biosynthesis. Catalyzes the rearrangement of 1-deoxy-D-xylulose 5-phosphate (DXP) to produce the thiazole phosphate moiety of thiamine. Sulfur is provided by the thiocarboxylate moiety of the carrier protein ThiS. In vitro, sulfur can be provided by H(2)S. In Chromobacterium violaceum (strain ATCC 12472 / DSM 30191 / JCM 1249 / CCUG 213 / NBRC 12614 / NCIMB 9131 / NCTC 9757 / MK), this protein is Thiazole synthase.